Reading from the N-terminus, the 138-residue chain is Spermidine export protein MdtJ (138 aa).

4 helical membrane-spanning segments follow: residues 1 to 21, 30 to 50, 54 to 74, and 81 to 101; these read MIYW…TLSM, VVGM…LAMA, VALG…ITVF, and ESLS…IMLI.

It belongs to the drug/metabolite transporter (DMT) superfamily. Small multidrug resistance (SMR) (TC 2.A.7.1) family. MdtJ subfamily. Forms a complex with MdtI.

The protein resides in the cell inner membrane. In terms of biological role, catalyzes the excretion of spermidine. This is Spermidine export protein MdtJ from Photorhabdus laumondii subsp. laumondii (strain DSM 15139 / CIP 105565 / TT01) (Photorhabdus luminescens subsp. laumondii).